Reading from the N-terminus, the 271-residue chain is Ribosomal RNA small subunit methyltransferase A (271 aa).

Residues Asn18, Leu20, Gly45, Glu66, Asp91, and Asn112 each contribute to the S-adenosyl-L-methionine site.

This sequence belongs to the class I-like SAM-binding methyltransferase superfamily. rRNA adenine N(6)-methyltransferase family. RsmA subfamily.

It localises to the cytoplasm. It catalyses the reaction adenosine(1518)/adenosine(1519) in 16S rRNA + 4 S-adenosyl-L-methionine = N(6)-dimethyladenosine(1518)/N(6)-dimethyladenosine(1519) in 16S rRNA + 4 S-adenosyl-L-homocysteine + 4 H(+). Functionally, specifically dimethylates two adjacent adenosines (A1518 and A1519) in the loop of a conserved hairpin near the 3'-end of 16S rRNA in the 30S particle. May play a critical role in biogenesis of 30S subunits. This Vibrio cholerae serotype O1 (strain ATCC 39315 / El Tor Inaba N16961) protein is Ribosomal RNA small subunit methyltransferase A.